The chain runs to 921 residues: Extended synaptotagmin-2 (921 aa).

Over 1–103 the chain is Cytoplasmic; it reads MTANRDAALS…RPGGPENPGG (103 aa). The interval 1–103 is disordered; that stretch reads MTANRDAALS…RPGGPENPGG (103 aa). Residues 58 to 75 show a composition bias toward basic residues; sequence GARRRAKTARGLRGHRQR. The chain crosses the membrane as a helical span at residues 104–124; sequence VLSVELPGLLAQLARSFALLL. Residues 125 to 127 are Lumenal-facing; it reads PVY. A helical membrane pass occupies residues 128-148; that stretch reads ALGYLGLSFSWVLLALALLAW. Residues 149–921 are Cytoplasmic-facing; the sequence is CRRSRGLKAL…EDGTRPQAMT (773 aa). The SMP-LTD domain occupies 191–370; that stretch reads DTERAEWLNK…LPNRITVPLV (180 aa). C2 domains follow at residues 369-489 and 514-639; these read LVSE…DEWF and NLDK…QLSN. Residues Lys-400, Asp-401, Asp-413, Asp-460, Glu-461, Asp-462, Asp-464, Asp-466, and Asp-467 each coordinate Ca(2+). The tract at residues 660–754 is disordered; sequence RERPPDHQHS…GHISVKEPTP (95 aa). Phosphoserine occurs at positions 691 and 693. At Thr-705 the chain carries Phosphothreonine. Phosphoserine is present on residues Ser-736, Ser-738, Ser-739, Ser-743, Ser-748, Ser-755, Ser-758, and Ser-761. Positions 786 to 908 constitute a C2 3 domain; that stretch reads PLGQIQLTIR…ELAKGWTQWY (123 aa). Residues 833–840 are required for phosphatidylinositol 4,5-bisphosphate-dependent location at the cell membrane; sequence KRRSGRRK.

It belongs to the extended synaptotagmin family. Homodimer. Interacts with ESYT1 and ESYT3. Interacts with FGFR1 that has been activated by FGF1 binding. Interacts with the AP-2 complex; identified in a complex with the AP-2 complex and FGFR1. In terms of tissue distribution, widely expressed with high level in cerebellum.

The protein resides in the cell membrane. Its subcellular location is the endoplasmic reticulum membrane. Functionally, tethers the endoplasmic reticulum to the cell membrane and promotes the formation of appositions between the endoplasmic reticulum and the cell membrane. Binds glycerophospholipids in a barrel-like domain and may play a role in cellular lipid transport. Plays a role in FGF signaling via its role in the rapid internalization of FGFR1 that has been activated by FGF1 binding; this occurs most likely via the AP-2 complex. Promotes the localization of SACM1L at endoplasmic reticulum-plasma membrane contact sites (EPCS). This chain is Extended synaptotagmin-2, found in Homo sapiens (Human).